Here is a 193-residue protein sequence, read N- to C-terminus: dCTP deaminase (193 aa).

Residues 110–115 (RSSLAR), D128, 136–138 (VLE), Y171, K178, and Q182 contribute to the dCTP site. The active-site Proton donor/acceptor is the E138. Residues 169-193 (RPYNRRQDAKYKDQQGAVASRIDKD) form a disordered region.

The protein belongs to the dCTP deaminase family. Homotrimer.

It carries out the reaction dCTP + H2O + H(+) = dUTP + NH4(+). It functions in the pathway pyrimidine metabolism; dUMP biosynthesis; dUMP from dCTP (dUTP route): step 1/2. Functionally, catalyzes the deamination of dCTP to dUTP. The polypeptide is dCTP deaminase (Pectobacterium atrosepticum (strain SCRI 1043 / ATCC BAA-672) (Erwinia carotovora subsp. atroseptica)).